Reading from the N-terminus, the 173-residue chain is Large ribosomal subunit protein uL22c (173 aa).

This sequence belongs to the universal ribosomal protein uL22 family. Part of the 50S ribosomal subunit.

It is found in the plastid. The protein resides in the chloroplast. Functionally, this protein binds specifically to 23S rRNA. In terms of biological role, the globular domain of the protein is located near the polypeptide exit tunnel on the outside of the subunit, while an extended beta-hairpin is found that lines the wall of the exit tunnel in the center of the 70S ribosome. This is Large ribosomal subunit protein uL22c (rpl22) from Drimys granadensis.